A 250-amino-acid chain; its full sequence is Agamous-like MADS-box protein AGL8 homolog (250 aa).

Residues 3-57 form the MADS-box domain; the sequence is RGRVQLKRIENKINRQVTFSKRRSGLLKKAHEISVLCDAEVGLIVFSTKGKLFEY. In terms of domain architecture, K-box spans 88–178; it reads PGSWTLEHAK…SKKVKEREKE (91 aa).

As to expression, abundant in vegetative organs.

The protein resides in the nucleus. Functionally, probable transcription factor. This chain is Agamous-like MADS-box protein AGL8 homolog, found in Solanum tuberosum (Potato).